We begin with the raw amino-acid sequence, 39 residues long: Photosystem II reaction center protein J (39 aa).

The chain crosses the membrane as a helical span at residues 7 to 27 (IPLWIVAVVVGLGVVTVVGLF).

This sequence belongs to the PsbJ family. PSII is composed of 1 copy each of membrane proteins PsbA, PsbB, PsbC, PsbD, PsbE, PsbF, PsbH, PsbI, PsbJ, PsbK, PsbL, PsbM, PsbT, PsbX, PsbY, PsbZ, Psb30/Ycf12, peripheral proteins PsbO, CyanoQ (PsbQ), PsbU, PsbV and a large number of cofactors. It forms dimeric complexes.

It is found in the cellular thylakoid membrane. One of the components of the core complex of photosystem II (PSII). PSII is a light-driven water:plastoquinone oxidoreductase that uses light energy to abstract electrons from H(2)O, generating O(2) and a proton gradient subsequently used for ATP formation. It consists of a core antenna complex that captures photons, and an electron transfer chain that converts photonic excitation into a charge separation. The polypeptide is Photosystem II reaction center protein J (Synechococcus sp. (strain JA-3-3Ab) (Cyanobacteria bacterium Yellowstone A-Prime)).